Consider the following 171-residue polypeptide: Co-chaperone protein HscB (171 aa).

The J domain maps to 2–74 (DYFTLFGLPA…LTRAEYLLSL (73 aa)).

This sequence belongs to the HscB family. As to quaternary structure, interacts with HscA and stimulates its ATPase activity. Interacts with IscU.

Functionally, co-chaperone involved in the maturation of iron-sulfur cluster-containing proteins. Seems to help targeting proteins to be folded toward HscA. In Salmonella arizonae (strain ATCC BAA-731 / CDC346-86 / RSK2980), this protein is Co-chaperone protein HscB.